A 259-amino-acid chain; its full sequence is Phosphatidylglycerol--prolipoprotein diacylglyceryl transferase (259 aa).

The next 4 membrane-spanning stretches (helical) occupy residues 12-32 (LSLHWYAVCILVGLLLAVYLA), 46-66 (IIDFILIAFPLAIIGARIYYV), 83-103 (IWNGGIAIYGGLITGTIVLFV), and 109-129 (VLNPIHFLDIAAPSVMLAQAI). Residue Arg-131 coordinates a 1,2-diacyl-sn-glycero-3-phospho-(1'-sn-glycerol). 3 consecutive transmembrane segments (helical) span residues 167–187 (VPTFLYESMWNLIGFVIIMVW), 194–214 (LLDGDILSFYLIWYGCGRLVI), and 226–246 (GIRVSQYVSVLLIVIAIVFIF).

This sequence belongs to the Lgt family.

The protein localises to the cell membrane. The catalysed reaction is L-cysteinyl-[prolipoprotein] + a 1,2-diacyl-sn-glycero-3-phospho-(1'-sn-glycerol) = an S-1,2-diacyl-sn-glyceryl-L-cysteinyl-[prolipoprotein] + sn-glycerol 1-phosphate + H(+). Its pathway is protein modification; lipoprotein biosynthesis (diacylglyceryl transfer). In terms of biological role, catalyzes the transfer of the diacylglyceryl group from phosphatidylglycerol to the sulfhydryl group of the N-terminal cysteine of a prolipoprotein, the first step in the formation of mature lipoproteins. The sequence is that of Phosphatidylglycerol--prolipoprotein diacylglyceryl transferase from Streptococcus equi subsp. zooepidemicus (strain MGCS10565).